Consider the following 365-residue polypeptide: GDSL lipase (365 aa).

The N-terminal stretch at methionine 1–serine 27 is a signal peptide. The active-site Nucleophile is serine 40. Asparagine 189 and asparagine 310 each carry an N-linked (GlcNAc...) asparagine glycan. Catalysis depends on charge relay system residues aspartate 318 and histidine 321.

This sequence belongs to the 'GDSL' lipolytic enzyme family. Restricted to the pericarp during achene maturation. Expressed in the leaves of mature plants and seedlings, as well as in buds and flowers. Present in disk florets.

It is found in the secreted. The protein localises to the extracellular space. It carries out the reaction (Z,S)-pyrethrolone + (1R,3R)-chrysanthemoyl-CoA = pyrethrin I + CoA. The catalysed reaction is (Z,S)-pyrethrolone + (1R,3R)-pyrethroyl-CoA = pyrethrin II + CoA. It catalyses the reaction (Z,S)-jasmololone + (1R,3R)-chrysanthemoyl-CoA = jasmolin I + CoA. The enzyme catalyses (Z,S)-cinerolone + (1R,3R)-chrysanthemoyl-CoA = cinerin I + CoA. It carries out the reaction (Z,S)-jasmololone + (1R,3R)-pyrethroyl-CoA = jasmolin II + CoA. The catalysed reaction is (Z,S)-cinerolone + (1R,3R)-pyrethroyl-CoA = cinerin II + CoA. It functions in the pathway isoprenoid biosynthesis. In terms of biological role, component of the monoterpenoid pyrethrins biosynthesis; pyrethrins are widely used plant-derived pesticide. Acyltransferase that catalyzes the esterification of terpene acids and lipid alcohol substrates into pyrethrins; mediates the transfer of a chrysanthemoyl moiety from the coenzyme A (CoA) thio-ester chrysanthemoyl CoA to pyrethrolone, and, to a lower extent, to jasmololone and cinerolone thus producing pyrethrins (e.g. pyrethrin type I). Can also use pyrethroyl CoA as substrate. Also has esterase activity, being able to cleave the ester bond of pyrethrin I, p-nitrophenyl butanoate and p-nitrophenyl octanoate to produce pyrethrolone and p-nitrophenol, respectively. This Tanacetum cinerariifolium (Dalmatian daisy) protein is GDSL lipase.